Here is a 129-residue protein sequence, read N- to C-terminus: Small ribosomal subunit protein uS11 (129 aa).

The protein belongs to the universal ribosomal protein uS11 family. In terms of assembly, part of the 30S ribosomal subunit. Interacts with proteins S7 and S18. Binds to IF-3.

Located on the platform of the 30S subunit, it bridges several disparate RNA helices of the 16S rRNA. Forms part of the Shine-Dalgarno cleft in the 70S ribosome. This is Small ribosomal subunit protein uS11 from Pseudomonas fluorescens (strain SBW25).